The following is a 94-amino-acid chain: Large ribosomal subunit protein bL27 (94 aa).

The propeptide occupies 1 to 9 (MNLANLQLF). Residues 11 to 34 (HKKGGGSTSNGRDSQAKRLGAKAA) form a disordered region.

It belongs to the bacterial ribosomal protein bL27 family. Post-translationally, the N-terminus is cleaved by ribosomal processing cysteine protease Prp.

This Streptococcus pyogenes serotype M3 (strain ATCC BAA-595 / MGAS315) protein is Large ribosomal subunit protein bL27.